The primary structure comprises 636 residues: MDRPHTPILDQVNYPSDLRRMSNADLAQCADELRAEVISAVSETGGHLGSSLGVVELSVAIHAVFNTPYDKLVWDVGHQCYPHKVLTGRRDRIRTLRQKDGLSGFTKRSESEYDPFGAAHSSTSISAALGFAAAQDLGEATGDGIAVIGDGSISAGMAYEALNNAGDLGKRLFVILNDNEMSIAPPVGAMSKYLTDLSAKSPLATLKDIADGVASHLPEPIRQGAERARELVTGHQPSATLFEHLGFTYIGPVDGHDMEELLTTLRAAKARATGPVLIHAVTVKGKGYSPAELSDDCYHGVAKFDVATGQQKKSAPNAPSYTSVFGQTLLNMAEADSRIVGVTAAMPGGTGISTLQKAKPNRVFDVGIAEQHAVTFSAGMAAGGLKPFCAIYSSFLQRGYDQIVHDVALQSLPVRFMIDRAGLVGADGPTHAGAFDIGYLSALPNMTVMACADEAELVHMMATAAAHNDGPIALRYPRGEGTGVALPDQGDVLEIGKGRVIQDGHDVAILSFGAHLEEAKDAATALEARGLSVTVADARFAKPLDTTLIDDLMTKHSALITVEQGAVLGFGGLVLHHLAATGQLDGRCAVRTLHLPDRFIDQASPAEMYADAGLTADDIAQAALEAMGVEVLAARA.

Residues H78 and 119–121 (AHS) contribute to the thiamine diphosphate site. D150 is a binding site for Mg(2+). Residues 151–152 (GS), N179, Y288, and E370 contribute to the thiamine diphosphate site. Position 179 (N179) interacts with Mg(2+).

This sequence belongs to the transketolase family. DXPS subfamily. Homodimer. It depends on Mg(2+) as a cofactor. Thiamine diphosphate serves as cofactor.

The enzyme catalyses D-glyceraldehyde 3-phosphate + pyruvate + H(+) = 1-deoxy-D-xylulose 5-phosphate + CO2. The protein operates within metabolic intermediate biosynthesis; 1-deoxy-D-xylulose 5-phosphate biosynthesis; 1-deoxy-D-xylulose 5-phosphate from D-glyceraldehyde 3-phosphate and pyruvate: step 1/1. Its function is as follows. Catalyzes the acyloin condensation reaction between C atoms 2 and 3 of pyruvate and glyceraldehyde 3-phosphate to yield 1-deoxy-D-xylulose-5-phosphate (DXP). The polypeptide is 1-deoxy-D-xylulose-5-phosphate synthase 2 (Jannaschia sp. (strain CCS1)).